Reading from the N-terminus, the 45-residue chain is Large ribosomal subunit protein bL34 (45 aa).

Composition is skewed to basic residues over residues methionine 1 to alanine 15 and methionine 22 to lysine 45. Residues methionine 1–lysine 45 are disordered.

The protein belongs to the bacterial ribosomal protein bL34 family.

The protein is Large ribosomal subunit protein bL34 of Sulfurihydrogenibium sp. (strain YO3AOP1).